We begin with the raw amino-acid sequence, 2624 residues long: Highly reducing polyketide synthase ALT1 (2624 aa).

Positions 28-449 (VLPLAIVGMG…GSNAHCILES (422 aa)) constitute a Ketosynthase family 3 (KS3) domain. The For beta-ketoacyl synthase activity role is filled by C200. The disordered stretch occupies residues 289–308 (VRGTSSNSDGKTPGMSMPSS). Residues H335 and H372 each act as for beta-ketoacyl synthase activity in the active site. Residues 523–544 (ESYSNHHTLTETTNPSNNTATN) are compositionally biased toward polar residues. A disordered region spans residues 523-545 (ESYSNHHTLTETTNPSNNTATNG). Residues 639–945 (VFTGQGAQWA…GYTPAMIRGK (307 aa)) are malonyl-CoA:ACP transacylase (MAT) domain. The N-terminal hotdog fold stretch occupies residues 1009–1140 (HELLGSQTLE…GQVRPGRDAH (132 aa)). The segment at 1009 to 1301 (HELLGSQTLE…LEGGKFSPIE (293 aa)) is dehydratase (DH) domain. The PKS/mFAS DH domain maps to 1009 to 1306 (HELLGSQTLE…FSPIEVDDGI (298 aa)). Residue H1041 is the Proton acceptor; for dehydratase activity of the active site. Positions 1157 to 1306 (QYPRPVDSLY…FSPIEVDDGI (150 aa)) are C-terminal hotdog fold. D1217 acts as the Proton donor; for dehydratase activity in catalysis. The interval 1493–1599 (LEIGAGTGGA…RKLLAPEGYL (107 aa)) is methyltransferase (CMet) domain. The segment at 1895–2205 (GLLQTLKWVD…KGTHLGKIVV (311 aa)) is enoyl reductase (ER) (ER) domain. The tract at residues 2230–2509 (TYVLVGGLGG…DSDALRFFIT (280 aa)) is ketoreductase (KR) domain. The Carrier domain occupies 2522-2600 (ASLDLVTRTI…GLAKLILDAL (79 aa)). At S2559 the chain carries O-(pantetheine 4'-phosphoryl)serine.

It functions in the pathway mycotoxin biosynthesis. Its function is as follows. Highly reducing polyketide synthase; part of the gene cluster that mediates the biosynthesis of the host-selective toxins (HSTs) AAL-toxins, sphinganine-analog mycotoxins responsible for Alternaria stem canker on tomato by the tomato pathotype. The biosynthesis starts with the polyketide synthase ALT1-catalyzed C-16 carbon chain assembly from one starter acetyl-CoA unit with malonyl-CoA extender units. ALT1 also selectively transfers methyl groups at the first and the third cycle of chain elongation for AAL toxin. The C-16 polyketide chain is released from the enzyme by a nucleophilic attack of a carbanion, which is derived from R-carbon of glycin by decarboxylation, on the carbonyl carbon of polyketide acyl chain. This step is probably catalyzed by a pyridoxal 5'-phosphate-dependent aminoacyl transferase ALT4. The respective functions of the other enzymes encoded by the cluster have still to be elucidated. The sphingosine N-acyltransferase-like protein ALT7 seems not to act as a resistance/self-tolerance factor against the toxin in the toxin biosynthetic gene cluster, contrary to what is expected. The chain is Highly reducing polyketide synthase ALT1 from Alternaria alternata (Alternaria rot fungus).